Consider the following 361-residue polypeptide: tRNA N6-adenosine threonylcarbamoyltransferase (361 aa).

Fe cation contacts are provided by histidine 110 and histidine 114. Substrate contacts are provided by residues 132-136 (LVSGG), aspartate 165, glycine 178, aspartate 182, and asparagine 284. Aspartate 312 lines the Fe cation pocket.

This sequence belongs to the KAE1 / TsaD family. Fe(2+) serves as cofactor.

The protein resides in the cytoplasm. It catalyses the reaction L-threonylcarbamoyladenylate + adenosine(37) in tRNA = N(6)-L-threonylcarbamoyladenosine(37) in tRNA + AMP + H(+). Functionally, required for the formation of a threonylcarbamoyl group on adenosine at position 37 (t(6)A37) in tRNAs that read codons beginning with adenine. Is involved in the transfer of the threonylcarbamoyl moiety of threonylcarbamoyl-AMP (TC-AMP) to the N6 group of A37, together with TsaE and TsaB. TsaD likely plays a direct catalytic role in this reaction. The sequence is that of tRNA N6-adenosine threonylcarbamoyltransferase from Desulfovibrio desulfuricans (strain ATCC 27774 / DSM 6949 / MB).